Here is a 392-residue protein sequence, read N- to C-terminus: Quinolinate synthase (392 aa).

The segment at 1–23 (MVDLPTTTPPAQPTTGNDEVDAL) is disordered. Positions 57 and 74 each coordinate iminosuccinate. Residue cysteine 131 coordinates [4Fe-4S] cluster. Iminosuccinate-binding positions include 163-165 (YIN) and serine 184. Cysteine 254 lines the [4Fe-4S] cluster pocket. Iminosuccinate is bound by residues 280–282 (HPE) and threonine 297. Cysteine 344 contributes to the [4Fe-4S] cluster binding site.

The protein belongs to the quinolinate synthase family. Type 3 subfamily. The cofactor is [4Fe-4S] cluster.

The protein resides in the cytoplasm. It carries out the reaction iminosuccinate + dihydroxyacetone phosphate = quinolinate + phosphate + 2 H2O + H(+). Its pathway is cofactor biosynthesis; NAD(+) biosynthesis; quinolinate from iminoaspartate: step 1/1. Catalyzes the condensation of iminoaspartate with dihydroxyacetone phosphate to form quinolinate. This is Quinolinate synthase from Rhodopirellula baltica (strain DSM 10527 / NCIMB 13988 / SH1).